We begin with the raw amino-acid sequence, 294 residues long: Elongation factor Ts (294 aa).

The involved in Mg(2+) ion dislocation from EF-Tu stretch occupies residues 82 to 85; it reads TDFV.

This sequence belongs to the EF-Ts family.

The protein resides in the cytoplasm. Associates with the EF-Tu.GDP complex and induces the exchange of GDP to GTP. It remains bound to the aminoacyl-tRNA.EF-Tu.GTP complex up to the GTP hydrolysis stage on the ribosome. The polypeptide is Elongation factor Ts (Psychrobacter cryohalolentis (strain ATCC BAA-1226 / DSM 17306 / VKM B-2378 / K5)).